We begin with the raw amino-acid sequence, 580 residues long: Type 3 secretion system translocon protein SctE (580 aa).

The next 2 helical transmembrane spans lie at 313–333 and 399–419; these read ILGA…GGAS and IGSI…VVLV.

The protein belongs to the SctE/SipB/YopB family. The core secretion machinery of the T3SS is composed of approximately 20 different proteins, including cytoplasmic components, a base, an export apparatus and a needle. This subunit is involved in the formation of a pore, called the translocon, in host membrane.

The protein localises to the secreted. It is found in the host membrane. Component of the type III secretion system (T3SS), also called injectisome, which is used to inject bacterial effector proteins into eukaryotic host cells. IpaB/SctE and IpaC/SctB are inserted into the host membrane where they form a pore and allow the translocation of effector proteins into the cytosol of target cells. This Shigella dysenteriae protein is Type 3 secretion system translocon protein SctE.